A 124-amino-acid polypeptide reads, in one-letter code: Glycine cleavage system H protein (124 aa).

Residues 22–104 (LVITGITDHA…YGKGWIYKIK (83 aa)) enclose the Lipoyl-binding domain. Lysine 63 is modified (N6-lipoyllysine).

Belongs to the GcvH family. In terms of assembly, the glycine cleavage system is composed of four proteins: P, T, L and H. The cofactor is (R)-lipoate.

Its function is as follows. The glycine cleavage system catalyzes the degradation of glycine. The H protein shuttles the methylamine group of glycine from the P protein to the T protein. The protein is Glycine cleavage system H protein of Acinetobacter baumannii (strain SDF).